Reading from the N-terminus, the 477-residue chain is SH3 domain-binding protein 5 homolog (477 aa).

Positions 12-95 (QIQIELENLN…AAVKFQRANE (84 aa)) form a coiled coil. Residues Ser113 and Ser115 each carry the phosphoserine modification. A coiled-coil region spans residues 122–221 (NAWQEMLNHA…YSTALRNLER (100 aa)). Disordered regions lie at residues 224-258 (EDIH…ALPS) and 276-306 (GSQM…ETGA). Over residues 291–305 (ETEDEEDACDYDETG) the composition is skewed to acidic residues.

It belongs to the SH3BP5 family.

The polypeptide is SH3 domain-binding protein 5 homolog (pcs) (Drosophila melanogaster (Fruit fly)).